A 209-amino-acid polypeptide reads, in one-letter code: MTERRVPFSLLRSPSWDPFRDWYPAHSRLFDQAFGLPRLPEEWAQWFGHSGWPGYVRPIPPAVEGPAAAAAAAAPAYSRALSRQLSSGVSEIRQTADRWRVSLDVNHFAPEELTVKTKDGVVEITGKHEERQDEHGYISRRLTPKYTLPPGVDPTLVSSSLSPEGTLTVEAPMPKPATQSAEITIPVTFEARAQIGGPEAGKSEQSGAK.

R12 carries the omega-N-methylarginine modification. S13 carries the phosphoserine modification. The residue at position 15 (S15) is a Phosphoserine; by MAPKAPK2 and MAPKAPK3. The residue at position 27 (S27) is a Phosphoserine. The segment at 74-209 (APAYSRALSR…AGKSEQSGAK (136 aa)) is interaction with TGFB1I1. The 109-residue stretch at 80 to 188 (ALSRQLSSGV…QSAEITIPVT (109 aa)) folds into the sHSP domain. 2 positions are modified to phosphoserine; by MAPKAPK2, MAPKAPK3 and MAPKAPK5: S82 and S86. S87, S90, and S102 each carry phosphoserine. Residue K127 is modified to N6-acetyllysine. The residue at position 178 (T178) is a Phosphothreonine. 2 positions are modified to phosphoserine: S180 and S203.

This sequence belongs to the small heat shock protein (HSP20) family. Homooligomer. Homodimer; becomes monomeric upon activation. Heterooligomer; with HSPB6. Associates with alpha- and beta-tubulin. Interacts with TGFB1I1. Interacts with CRYAB. Interacts with HSPB8. Interacts with HSPBAP1. Post-translationally, phosphorylated upon exposure to protein kinase C activators and heat shock. Phosphorylation by MAPKAPK2 and MAPKAPK3 in response to stress dissociates HSPB1 from large small heat-shock protein (sHsps) oligomers and impairs its chaperone activity and ability to protect against oxidative stress effectively. Phosphorylation by MAPKAPK5 in response to PKA stimulation induces F-actin rearrangement.

Its subcellular location is the cytoplasm. It is found in the nucleus. The protein localises to the cytoskeleton. It localises to the spindle. Functionally, small heat shock protein which functions as a molecular chaperone probably maintaining denatured proteins in a folding-competent state. Plays a role in stress resistance and actin organization. Through its molecular chaperone activity may regulate numerous biological processes including the phosphorylation and the axonal transport of neurofilament proteins. In Canis lupus familiaris (Dog), this protein is Heat shock protein beta-1 (HSPB1).